Reading from the N-terminus, the 1252-residue chain is DNA-directed RNA polymerase subunit beta (1252 aa).

Belongs to the RNA polymerase beta chain family. As to quaternary structure, the RNAP catalytic core consists of 2 alpha, 1 beta, 1 beta' and 1 omega subunit. When a sigma factor is associated with the core the holoenzyme is formed, which can initiate transcription.

It carries out the reaction RNA(n) + a ribonucleoside 5'-triphosphate = RNA(n+1) + diphosphate. Functionally, DNA-dependent RNA polymerase catalyzes the transcription of DNA into RNA using the four ribonucleoside triphosphates as substrates. This Chlamydia pneumoniae (Chlamydophila pneumoniae) protein is DNA-directed RNA polymerase subunit beta.